Consider the following 375-residue polypeptide: Heat-inducible transcription repressor HrcA (375 aa).

The segment covering 307–318 has biased composition (low complexity); the sequence is ATDGATHAAASS. The segment at 307–331 is disordered; that stretch reads ATDGATHAAASSQTENQSGDDTRQA.

This sequence belongs to the HrcA family.

Functionally, negative regulator of class I heat shock genes (grpE-dnaK-dnaJ and groELS operons). Prevents heat-shock induction of these operons. This chain is Heat-inducible transcription repressor HrcA, found in Bifidobacterium adolescentis (strain ATCC 15703 / DSM 20083 / NCTC 11814 / E194a).